The chain runs to 341 residues: L-threonine 3-dehydrogenase (341 aa).

Cysteine 38 is a Zn(2+) binding site. Catalysis depends on charge relay system residues threonine 40 and histidine 43. Residues histidine 63, glutamate 64, cysteine 93, cysteine 96, cysteine 99, and cysteine 107 each coordinate Zn(2+). Residues isoleucine 175, aspartate 195, arginine 200, 262 to 264 (LGI), and 286 to 287 (IY) contribute to the NAD(+) site.

It belongs to the zinc-containing alcohol dehydrogenase family. As to quaternary structure, homotetramer. Zn(2+) is required as a cofactor.

Its subcellular location is the cytoplasm. The enzyme catalyses L-threonine + NAD(+) = (2S)-2-amino-3-oxobutanoate + NADH + H(+). It participates in amino-acid degradation; L-threonine degradation via oxydo-reductase pathway; glycine from L-threonine: step 1/2. Catalyzes the NAD(+)-dependent oxidation of L-threonine to 2-amino-3-ketobutyrate. In Shewanella pealeana (strain ATCC 700345 / ANG-SQ1), this protein is L-threonine 3-dehydrogenase.